The chain runs to 987 residues: Pentatricopeptide repeat-containing protein At1g06710, mitochondrial (987 aa).

Residues methionine 1 to methionine 42 constitute a mitochondrion transit peptide. PPR repeat units follow at residues threonine 164–valine 198, phenylalanine 199–proline 233, serine 234–methionine 268, aspartate 269–valine 299, aspartate 301–proline 335, asparagine 336–proline 370, serine 371–proline 405, glycine 406–leucine 446, asparagine 447–proline 481, aspartate 482–alanine 516, aspartate 517–proline 551, asparagine 552–proline 586, asparagine 587–proline 621, asparagine 638–proline 672, asparagine 673–alanine 707, threonine 708–proline 742, asparagine 743–proline 777, asparagine 778–proline 812, asparagine 813–threonine 847, phenylalanine 881–leucine 915, tyrosine 918–proline 952, and glutamate 953–leucine 987.

Belongs to the PPR family. P subfamily.

It localises to the mitochondrion. The protein is Pentatricopeptide repeat-containing protein At1g06710, mitochondrial of Arabidopsis thaliana (Mouse-ear cress).